Reading from the N-terminus, the 150-residue chain is Urease accessory protein UreE (150 aa).

Belongs to the UreE family.

Its subcellular location is the cytoplasm. Functionally, involved in urease metallocenter assembly. Binds nickel. Probably functions as a nickel donor during metallocenter assembly. The protein is Urease accessory protein UreE of Streptococcus salivarius (strain 57.I).